Reading from the N-terminus, the 213-residue chain is ER lumen protein-retaining receptor (213 aa).

The Lumenal portion of the chain corresponds to 1–2 (MN). The chain crosses the membrane as a helical span at residues 3-21 (IFRITADLAHAVAIVILLL). Residues 22–35 (KIWKSRSCEGISGR) are Cytoplasmic-facing. The helical transmembrane segment at 36-53 (SQILFAVTFFTRYLDLFT) threads the bilayer. The Lumenal portion of the chain corresponds to 54–61 (SFYSLYNT). Residues 62–80 (VMKVLFLAGSIGTVYLMWV) traverse the membrane as a helical segment. At 81-96 (KFKATYDRNNDTFRIE) the chain is on the cytoplasmic side. A helical transmembrane segment spans residues 97–110 (FLVIPSIILALIIN). Residues 111-117 (HEFMFME) lie on the Lumenal side of the membrane. The chain crosses the membrane as a helical span at residues 118–137 (VMWTFSIYLEAVAIMPQLFM). Residues 138–149 (LSRTGNAETITA) are Cytoplasmic-facing. A helical transmembrane segment spans residues 150–168 (HYLFALGSYRFLYIFNWVY). At 169 to 178 (RYYTESFFDP) the chain is on the lumenal side. Residues 179-199 (IAVVAGIVQTVLYADFFYLYI) traverse the membrane as a helical segment. The Cytoplasmic segment spans residues 200 to 213 (TRVIQSNRQFEMSA).

It belongs to the ERD2 family.

Its subcellular location is the endoplasmic reticulum membrane. Its function is as follows. Required for the retention of luminal endoplasmic reticulum proteins. Determines the specificity of the luminal ER protein retention system. Also required for normal vesicular traffic through the Golgi. In Caenorhabditis briggsae, this protein is ER lumen protein-retaining receptor (erd-2.1).